A 249-amino-acid chain; its full sequence is Diaminopimelate epimerase (249 aa).

The substrate site is built by Asn11 and Asn60. The active-site Proton donor is Cys69. Substrate-binding positions include 70–71, Asn164, and 182–183; these read GN and ER. Catalysis depends on Cys192, which acts as the Proton acceptor. 193 to 194 lines the substrate pocket; the sequence is GT.

This sequence belongs to the diaminopimelate epimerase family. As to quaternary structure, homodimer.

Its subcellular location is the cytoplasm. It catalyses the reaction (2S,6S)-2,6-diaminopimelate = meso-2,6-diaminopimelate. Its pathway is amino-acid biosynthesis; L-lysine biosynthesis via DAP pathway; DL-2,6-diaminopimelate from LL-2,6-diaminopimelate: step 1/1. Functionally, catalyzes the stereoinversion of LL-2,6-diaminopimelate (L,L-DAP) to meso-diaminopimelate (meso-DAP), a precursor of L-lysine and an essential component of the bacterial peptidoglycan. The sequence is that of Diaminopimelate epimerase from Campylobacter jejuni (strain RM1221).